The chain runs to 428 residues: MSAVVKSIKAREILDSRGNPTVEADVVLSDGSFGRAAVPSGASTGSHEAVELRDGDKSRYNGLGVHKAVANVNTTIASAISGFKASDQQRLDNLLIELDGTPNKAKLGANAMLATSLAVAHAAAASRHMPLYRYLNNSEEYILPVPMFNILNGGKHASNSTDFQEFMVMPVGAKSFAQALQMGTEVYHSLKKVLKGMNQNTTVGDEGGFAPSLPTNKDAVEVILKAIEKAGYRPGEDIFIALDPASSELYQDGKYTLATENKTLSSAEMVDYWCGWVEKYPIISIEDGLFEDDWDGWKLLTRKIGNKVQLVGDDFYVTNIKRLDRGIKEKASNSILIKLNQIGTLSETIAAIKMANNAGWTAVVSHRSGETEDTTIADLAVAMNAGQIKTGAPCRSERTAKYNRLLRIEEELGGKAKYPGKDAFLNLK.

Q164 lines the (2R)-2-phosphoglycerate pocket. Residue E206 is the Proton donor of the active site. Mg(2+)-binding residues include D243, E286, and D313. K338, R367, S368, and K389 together coordinate (2R)-2-phosphoglycerate. Residue K338 is the Proton acceptor of the active site.

It belongs to the enolase family. Mg(2+) serves as cofactor.

The protein resides in the cytoplasm. Its subcellular location is the secreted. The protein localises to the cell surface. The enzyme catalyses (2R)-2-phosphoglycerate = phosphoenolpyruvate + H2O. It participates in carbohydrate degradation; glycolysis; pyruvate from D-glyceraldehyde 3-phosphate: step 4/5. Its function is as follows. Catalyzes the reversible conversion of 2-phosphoglycerate (2-PG) into phosphoenolpyruvate (PEP). It is essential for the degradation of carbohydrates via glycolysis. In Dehalococcoides mccartyi (strain ATCC BAA-2100 / JCM 16839 / KCTC 5957 / BAV1), this protein is Enolase.